Consider the following 104-residue polypeptide: Cytochrome c oxidase assembly factor 6 (104 aa).

Residues 1–22 (MGLFSFDGGKKESQPPNTRSQR) are disordered. In terms of domain architecture, CHCH spans 22-76 (RKLCWESRDAFFQCLDKADILDAMDPKNSKSIKSHCKVENEKFEENCAHSWIKYF). The Cx9C motif motif lies at 25 to 35 (CWESRDAFFQC). 2 cysteine pairs are disulfide-bonded: Cys25-Cys68 and Cys35-Cys57. The Cx10C motif motif lies at 57–68 (CKVENEKFEENC).

The protein belongs to the cytochrome c oxidase subunit 6B family. In terms of assembly, interacts with COX2.

The protein resides in the cytoplasm. The protein localises to the nucleus. It is found in the mitochondrion intermembrane space. In terms of biological role, involved in the maturation of the mitochondrial respiratory chain complex IV subunit MT-CO2/COX2. Thereby, may regulate early steps of complex IV assembly. Mitochondrial respiratory chain complex IV or cytochrome c oxidase is the component of the respiratory chain that catalyzes the transfer of electrons from intermembrane space cytochrome c to molecular oxygen in the matrix and as a consequence contributes to the proton gradient involved in mitochondrial ATP synthesis. May also be required for efficient formation of respiratory supercomplexes comprised of complexes III and IV. This Saccharomyces cerevisiae (strain ATCC 204508 / S288c) (Baker's yeast) protein is Cytochrome c oxidase assembly factor 6.